The following is a 127-amino-acid chain: Small ribosomal subunit protein uS11 (127 aa).

Belongs to the universal ribosomal protein uS11 family. Part of the 30S ribosomal subunit. Interacts with proteins S7 and S18. Binds to IF-3.

Its function is as follows. Located on the platform of the 30S subunit, it bridges several disparate RNA helices of the 16S rRNA. Forms part of the Shine-Dalgarno cleft in the 70S ribosome. This Ehrlichia ruminantium (strain Gardel) protein is Small ribosomal subunit protein uS11.